Here is a 514-residue protein sequence, read N- to C-terminus: Lysine--tRNA ligase (514 aa).

Mg(2+) is bound by residues Glu-424 and Glu-431.

It belongs to the class-II aminoacyl-tRNA synthetase family. Homodimer. Mg(2+) serves as cofactor.

It localises to the cytoplasm. The catalysed reaction is tRNA(Lys) + L-lysine + ATP = L-lysyl-tRNA(Lys) + AMP + diphosphate. The polypeptide is Lysine--tRNA ligase (Cupriavidus necator (strain ATCC 17699 / DSM 428 / KCTC 22496 / NCIMB 10442 / H16 / Stanier 337) (Ralstonia eutropha)).